The following is a 350-amino-acid chain: Quinolinate phosphoribosyltransferase [decarboxylating] 1 (350 aa).

Substrate contacts are provided by residues R141, 172-174, R196, K206, E239, D266, 298-300, and 319-321; these read TRK, SGN, and SGA.

It belongs to the NadC/ModD family.

It catalyses the reaction nicotinate beta-D-ribonucleotide + CO2 + diphosphate = quinolinate + 5-phospho-alpha-D-ribose 1-diphosphate + 2 H(+). It functions in the pathway alkaloid biosynthesis; nicotine biosynthesis. It participates in cofactor biosynthesis; NAD(+) biosynthesis; nicotinate D-ribonucleotide from quinolinate: step 1/1. In terms of biological role, involved in the biosynthesis of pyridine alkaloid natural products, leading mainly to the production of anabasine, anatabine, nicotine and nornicotine, effective deterrents against herbivores with antiparasitic and pesticide properties (neurotoxins); nornicotine serves as the precursor in the synthesis of the carcinogen compound N'-nitrosonornicotine (NNN). Involved in the catabolism of quinolinic acid (QA). In Nicotiana glauca (Glaucous tobacco), this protein is Quinolinate phosphoribosyltransferase [decarboxylating] 1.